A 2776-amino-acid chain; its full sequence is A-kinase anchor protein 13 (2776 aa).

Disordered stretches follow at residues 371–401 (KNKDVGRKGEEAEPASAMDSGSASHQDSCLQ), 452–518 (EPDA…TETT), 547–584 (PAEASPALSSEEIPTEKPGMETQERGCEGGTTSDQSSP), 618–641 (TMPGPSSDGMPEQNSESHARPAQS), 653–689 (EAGTPSAEATHQPSTVTSSGRLEECGSGKASLPESTM), 760–871 (VSQT…SPTA), 910–951 (ALGQ…IPGL), 995–1029 (GAAKSLVPPRTSLSADSKQKASSTEQSGSSLLPSG), 1431–1508 (LCDT…MDSI), 1527–1546 (PFRRHSWGPGKNAASDAEMN), and 1565–1603 (RRSFSLEGLTGGGVGNKPSSSLEMSSANSSELRNPFGGE). A compositionally biased stretch (polar residues) spans 389 to 401 (DSGSASHQDSCLQ). Residues 493-515 (QNNKPQVGEGTKERLENSDSSTT) are important for interaction with PRKAR2A. Over residues 560–573 (PTEKPGMETQERGC) the composition is skewed to basic and acidic residues. The span at 659–672 (AEATHQPSTVTSSG) shows a compositional bias: polar residues. The segment covering 773–788 (SPPASSFSLASSPESE) has biased composition (low complexity). Residue Ser-784 is modified to Phosphoserine. At Thr-809 the chain carries Phosphothreonine. 2 stretches are compositionally biased toward basic and acidic residues: residues 820 to 834 (DGPDGRDLSDTDKVG) and 914 to 940 (DGKDRAMSCSSVKEDVHSSEMSREDQR). Phosphothreonine is present on Thr-941. Positions 1005–1020 (TSLSADSKQKASSTEQ) are enriched in polar residues. The span at 1433 to 1444 (DTTGSSSSTDDT) shows a compositional bias: low complexity. The span at 1454–1476 (GSDVSLPQTSKLNRSRNHQSANG) shows a compositional bias: polar residues. A phosphoserine mark is found at Ser-1455, Ser-1473, Ser-1507, Ser-1532, and Ser-1569. The segment at 1552-1678 (RALGHVVRRP…SRPFHSTSAN (127 aa)) is important for interaction with MAP2K3. A compositionally biased stretch (low complexity) spans 1583 to 1594 (SSSLEMSSANSS). Ser-1608, Ser-1611, and Ser-1613 each carry phosphoserine. Position 1637 is an N6-methyllysine (Lys-1637). The disordered stretch occupies residues 1711–1756 (TFSYIRNKMSSSKKSKEKEKEKDKIKEKEKDSKEKEKDKKTLNGHT). Residues 1724–1751 (KSKEKEKEKDKIKEKEKDSKEKEKDKKT) are compositionally biased toward basic and acidic residues. A Phorbol-ester/DAG-type zinc finger spans residues 1754 to 1801 (GHTFSPIPIVGPISCSQCMKPFTNKDAYTCAGCGAFVHKGCRENLASC). Residues Ser-1839, Ser-1858, and Ser-1892 each carry the phosphoserine modification. The interval 1882 to 2776 (MSNTWKFLSH…VPAEGEEIFC (895 aa)) is interaction with ESR1. Residue Thr-1893 is modified to Phosphothreonine. A phosphoserine mark is found at Ser-1895 and Ser-1908. In terms of domain architecture, DH spans 1957–2154 (KRQEVIYELM…KDVIGAVDSK (198 aa)). In terms of domain architecture, PH spans 2194–2296 (KLVRDGSVFL…WIQIIQDTIN (103 aa)). Phosphoserine occurs at positions 2308 and 2361. Residues 2308-2345 (SENEEEKKLLDTKARELKEQLQQKDQQILLLLEEKEMI) adopt a coiled-coil conformation. Thr-2431 carries the post-translational modification Phosphothreonine. The tract at residues 2436–2471 (DCHQMNASKGGEKEEGDDGQDLRRTESDSGLKKGGN) is disordered. The segment covering 2455–2466 (QDLRRTESDSGL) has biased composition (basic and acidic residues). Phosphoserine is present on residues Ser-2527 and Ser-2530. Residues 2532–2646 (LIEQEKQRSL…ERLSQRQMDQ (115 aa)) are a coiled coil. Disordered regions lie at residues 2549 to 2605 (ANLQ…EELQ) and 2626 to 2776 (EREQ…EIFC). Basic and acidic residues-rich tracts occupy residues 2558–2605 (HLEE…EELQ) and 2626–2640 (EREQEQLRRDTERLS). Composition is skewed to polar residues over residues 2641–2653 (QRQMDQNLCQVSN), 2665–2700 (LPNSDEFSSPSAPSVTKSGSLDSELSVSPKRNSISR), and 2713–2727 (SASQTKVPEGQSQAP). Phosphoserine occurs at positions 2673 and 2692.

In terms of assembly, interacts with the cAMP-dependent protein kinase (PKA) holoenzyme and with the regulatory subunit PRKAR2A. Interacts with RHOA. Also interacts with RHOB and RHOC. Identified in a ternary complex with RHOA and PRKAR2A. Identified in a complex with NR3C1 and RHOA. Interacts with BRAF and KSR1. Identified in a complex with BRAF and KSR1. Component of a signaling complex containing at least AKAP13, PKN1, MAPK14, ZAK and MAP2K3. Within this complex, AKAP13 interacts directly with PKN1, which in turn recruits MAPK14, MAP2K3 and ZAK. Interacts (phosphorylated form) with YWHAB and YWHAZ. Interaction with YWHAB inhibits activation of RHOA, interferes with PKN1 binding and activation of MAP kinases. Interacts with GNA12. Interacts with IKBKB. Interacts with ESR1, THRA, PPARA and NME2. Interacts (via the C-terminal domain after the PH domain) with MEF2C and RXRB. Interacts (via the C-terminal domain after the PH domain) with PRKD1. As to expression, detected in embryonic heart, limb bud, first branchial arch and forebrain (at protein level). Detected in heart. Detected in perichondrium, but not in the bone growth plate.

It localises to the cytoplasm. The protein localises to the cytosol. It is found in the cell cortex. The protein resides in the cytoskeleton. Its subcellular location is the nucleus. It localises to the membrane. Scaffold protein that plays an important role in assembling signaling complexes downstream of several types of G protein-coupled receptors. Activates RHOA in response to signaling via G protein-coupled receptors via its function as Rho guanine nucleotide exchange factor. May also activate other Rho family members. Part of a kinase signaling complex that links ADRA1A and ADRA1B adrenergic receptor signaling to the activation of downstream p38 MAP kinases, such as MAPK11 and MAPK14. Part of a signaling complex that links ADRA1B signaling to the activation of RHOA and IKBKB/IKKB, leading to increased NF-kappa-B transcriptional activity. Part of a RHOA-dependent signaling cascade that mediates responses to lysophosphatidic acid (LPA), a signaling molecule that activates G-protein coupled receptors and potentiates transcriptional activation of the glucocorticoid receptor NR3C1. Part of a signaling cascade that stimulates MEF2C-dependent gene expression in response to lysophosphatidic acid (LPA). Part of a signaling pathway that activates MAPK11 and/or MAPK14 and leads to increased transcription activation of the estrogen receptors ESR1 and ESR2. Part of a signaling cascade that links cAMP and EGFR signaling to BRAF signaling and to PKA-mediated phosphorylation of KSR1, leading to the activation of downstream MAP kinases, such as MAPK1 or MAPK3. Functions as a scaffold protein that anchors cAMP-dependent protein kinase (PKA) and PRKD1. This promotes activation of PRKD1, leading to increased phosphorylation of HDAC5 and ultimately cardiomyocyte hypertrophy. Has no guanine nucleotide exchange activity on CDC42, Ras or Rac. Required for normal embryonic heart development, and in particular for normal sarcomere formation in the developing cardiomyocytes. Plays a role in cardiomyocyte growth and cardiac hypertrophy in response to activation of the beta-adrenergic receptor by phenylephrine or isoproterenol. Required for normal adaptive cardiac hypertrophy in response to pressure overload. Plays a role in osteogenesis. The chain is A-kinase anchor protein 13 from Mus musculus (Mouse).